The following is a 504-amino-acid chain: Deoxyguanosinetriphosphate triphosphohydrolase (504 aa).

The HD domain occupies 66–273 (RLTHSLEVQQ…MEAADDISYC (208 aa)).

Belongs to the dGTPase family. Type 1 subfamily. Homotetramer. Mg(2+) serves as cofactor.

The catalysed reaction is dGTP + H2O = 2'-deoxyguanosine + triphosphate + H(+). Its function is as follows. dGTPase preferentially hydrolyzes dGTP over the other canonical NTPs. The sequence is that of Deoxyguanosinetriphosphate triphosphohydrolase from Klebsiella pneumoniae (strain 342).